The sequence spans 172 residues: 3-hydroxydecanoyl-[acyl-carrier-protein] dehydratase (172 aa).

Residue histidine 71 is part of the active site.

It belongs to the thioester dehydratase family. FabA subfamily. As to quaternary structure, homodimer.

The protein resides in the cytoplasm. The catalysed reaction is a (3R)-hydroxyacyl-[ACP] = a (2E)-enoyl-[ACP] + H2O. It carries out the reaction (3R)-hydroxydecanoyl-[ACP] = (2E)-decenoyl-[ACP] + H2O. It catalyses the reaction (2E)-decenoyl-[ACP] = (3Z)-decenoyl-[ACP]. The protein operates within lipid metabolism; fatty acid biosynthesis. In terms of biological role, necessary for the introduction of cis unsaturation into fatty acids. Catalyzes the dehydration of (3R)-3-hydroxydecanoyl-ACP to E-(2)-decenoyl-ACP and then its isomerization to Z-(3)-decenoyl-ACP. Can catalyze the dehydratase reaction for beta-hydroxyacyl-ACPs with saturated chain lengths up to 16:0, being most active on intermediate chain length. The chain is 3-hydroxydecanoyl-[acyl-carrier-protein] dehydratase from Vibrio parahaemolyticus serotype O3:K6 (strain RIMD 2210633).